Reading from the N-terminus, the 674-residue chain is Translation factor GUF1, mitochondrial (674 aa).

Residues 1 to 33 constitute a mitochondrion transit peptide; it reads MLRPWFCFRSCVSLLSNRRQYGFRYLATAEPSK. The disordered stretch occupies residues 32-51; sequence SKSEKPAKPVKPAKPMSVQE. In terms of domain architecture, tr-type G spans 75–257; the sequence is QNYRNFSIVA…SIIKNIPAPV (183 aa). GTP is bound by residues 84 to 91, 150 to 154, and 204 to 207; these read AHVDHGKS, DTPGH, and NKID.

It belongs to the TRAFAC class translation factor GTPase superfamily. Classic translation factor GTPase family. LepA subfamily.

The protein resides in the mitochondrion inner membrane. It catalyses the reaction GTP + H2O = GDP + phosphate + H(+). Its function is as follows. Promotes mitochondrial protein synthesis. May act as a fidelity factor of the translation reaction, by catalyzing a one-codon backward translocation of tRNAs on improperly translocated ribosomes. Binds to mitochondrial ribosomes in a GTP-dependent manner. In Lodderomyces elongisporus (strain ATCC 11503 / CBS 2605 / JCM 1781 / NBRC 1676 / NRRL YB-4239) (Yeast), this protein is Translation factor GUF1, mitochondrial.